A 527-amino-acid chain; its full sequence is Transcription factor RBF1 (527 aa).

5 disordered regions span residues 1 to 36 (MSSN…IGAS), 258 to 281 (ANLY…HNEE), 328 to 365 (HHLL…QQAA), 395 to 433 (QLSQ…HGLD), and 470 to 527 (TQGN…SGFL). The DNA-binding element occupies 160 to 300 (HVRDALTTDE…LRMINPQHNH (141 aa)). Residues 263–281 (NEKDQKRKNKPDEPGHNEE) show a composition bias toward basic and acidic residues. Low complexity-rich tracts occupy residues 332-365 (QQEQ…QQAA) and 395-428 (QLSQ…PQQT).

This sequence belongs to the RBF1 family.

Its subcellular location is the nucleus. It is found in the chromosome. It localises to the telomere. In terms of biological role, transcriptional activator that binds to the RPG box and to telomeres. Involved in the regulation of the transition between yeast and filamentous forms and plays a role in virulence. Induces expression of HWP1, a major hyphal cell protein and virulence factor. This Candida albicans (Yeast) protein is Transcription factor RBF1 (RBF1).